Reading from the N-terminus, the 341-residue chain is Phosphate acyltransferase (341 aa).

The protein belongs to the PlsX family. Homodimer. Probably interacts with PlsY.

The protein resides in the cytoplasm. It catalyses the reaction a fatty acyl-[ACP] + phosphate = an acyl phosphate + holo-[ACP]. It participates in lipid metabolism; phospholipid metabolism. Its function is as follows. Catalyzes the reversible formation of acyl-phosphate (acyl-PO(4)) from acyl-[acyl-carrier-protein] (acyl-ACP). This enzyme utilizes acyl-ACP as fatty acyl donor, but not acyl-CoA. This chain is Phosphate acyltransferase, found in Vibrio atlanticus (strain LGP32) (Vibrio splendidus (strain Mel32)).